The primary structure comprises 397 residues: S-adenosylmethionine synthase (397 aa).

His-15 lines the ATP pocket. Position 17 (Asp-17) interacts with Mg(2+). Residue Glu-43 participates in K(+) binding. L-methionine contacts are provided by Glu-56 and Gln-99. The segment at 99 to 109 (QSPDIAQGVTA) is flexible loop. ATP contacts are provided by residues 173–175 (DGK), 242–243 (KF), Asp-251, 257–258 (RK), Ala-274, and Lys-278. L-methionine is bound at residue Asp-251. Residue Lys-282 coordinates L-methionine.

Belongs to the AdoMet synthase family. Homotetramer; dimer of dimers. The cofactor is Mg(2+). K(+) serves as cofactor.

Its subcellular location is the cytoplasm. It carries out the reaction L-methionine + ATP + H2O = S-adenosyl-L-methionine + phosphate + diphosphate. Its pathway is amino-acid biosynthesis; S-adenosyl-L-methionine biosynthesis; S-adenosyl-L-methionine from L-methionine: step 1/1. Functionally, catalyzes the formation of S-adenosylmethionine (AdoMet) from methionine and ATP. The overall synthetic reaction is composed of two sequential steps, AdoMet formation and the subsequent tripolyphosphate hydrolysis which occurs prior to release of AdoMet from the enzyme. The polypeptide is S-adenosylmethionine synthase (Cutibacterium acnes (strain DSM 16379 / KPA171202) (Propionibacterium acnes)).